The following is a 500-amino-acid chain: L-arabinose isomerase (500 aa).

Residues Glu306, Glu331, His348, and His447 each contribute to the Mn(2+) site.

The protein belongs to the arabinose isomerase family. It depends on Mn(2+) as a cofactor.

It catalyses the reaction beta-L-arabinopyranose = L-ribulose. It participates in carbohydrate degradation; L-arabinose degradation via L-ribulose; D-xylulose 5-phosphate from L-arabinose (bacterial route): step 1/3. Functionally, catalyzes the conversion of L-arabinose to L-ribulose. This Anoxybacillus flavithermus (strain DSM 21510 / WK1) protein is L-arabinose isomerase.